Reading from the N-terminus, the 316-residue chain is Ribosomal RNA small subunit methyltransferase H (316 aa).

S-adenosyl-L-methionine-binding positions include 37–39, Asp-56, Phe-83, Asp-106, and His-113; that span reads GGH. The segment at 276 to 316 is disordered; the sequence is PILPSEEETKENPASRSAKLRVLRKTKSADKKYKKENSKEE. The span at 302 to 316 shows a compositional bias: basic and acidic residues; that stretch reads KSADKKYKKENSKEE.

The protein belongs to the methyltransferase superfamily. RsmH family.

Its subcellular location is the cytoplasm. It catalyses the reaction cytidine(1402) in 16S rRNA + S-adenosyl-L-methionine = N(4)-methylcytidine(1402) in 16S rRNA + S-adenosyl-L-homocysteine + H(+). In terms of biological role, specifically methylates the N4 position of cytidine in position 1402 (C1402) of 16S rRNA. The chain is Ribosomal RNA small subunit methyltransferase H from Leptospira borgpetersenii serovar Hardjo-bovis (strain JB197).